A 296-amino-acid polypeptide reads, in one-letter code: uncharacterized protein (296 aa).

Residues 1 to 21 (MIFAVVDILEISIQLLCILLF) form a helical membrane-spanning segment.

Its subcellular location is the membrane. This is an uncharacterized protein from Caenorhabditis elegans.